Reading from the N-terminus, the 238-residue chain is Ribonuclease PH (238 aa).

Phosphate-binding positions include R86 and 124–126; that span reads GTR.

Belongs to the RNase PH family. Homohexameric ring arranged as a trimer of dimers.

It catalyses the reaction tRNA(n+1) + phosphate = tRNA(n) + a ribonucleoside 5'-diphosphate. Functionally, phosphorolytic 3'-5' exoribonuclease that plays an important role in tRNA 3'-end maturation. Removes nucleotide residues following the 3'-CCA terminus of tRNAs; can also add nucleotides to the ends of RNA molecules by using nucleoside diphosphates as substrates, but this may not be physiologically important. Probably plays a role in initiation of 16S rRNA degradation (leading to ribosome degradation) during starvation. The sequence is that of Ribonuclease PH from Geobacter sulfurreducens (strain ATCC 51573 / DSM 12127 / PCA).